The chain runs to 356 residues: tRNA-specific 2-thiouridylase MnmA (356 aa).

Residues 6–13 and L32 each bind ATP; that span reads GMSGGVDS. Catalysis depends on C102, which acts as the Nucleophile. Cysteines 102 and 200 form a disulfide. G127 contacts ATP. The tract at residues 150-152 is interaction with tRNA; it reads RDQ. C200 functions as the Cysteine persulfide intermediate in the catalytic mechanism. Positions 302-303 are interaction with tRNA; that stretch reads RY.

The protein belongs to the MnmA/TRMU family.

The protein resides in the cytoplasm. The catalysed reaction is S-sulfanyl-L-cysteinyl-[protein] + uridine(34) in tRNA + AH2 + ATP = 2-thiouridine(34) in tRNA + L-cysteinyl-[protein] + A + AMP + diphosphate + H(+). In terms of biological role, catalyzes the 2-thiolation of uridine at the wobble position (U34) of tRNA, leading to the formation of s(2)U34. This chain is tRNA-specific 2-thiouridylase MnmA, found in Aquifex aeolicus (strain VF5).